The sequence spans 185 residues: Ribosome-recycling factor (185 aa).

It belongs to the RRF family.

The protein resides in the cytoplasm. Its function is as follows. Responsible for the release of ribosomes from messenger RNA at the termination of protein biosynthesis. May increase the efficiency of translation by recycling ribosomes from one round of translation to another. In Pseudomonas putida (strain GB-1), this protein is Ribosome-recycling factor.